A 105-amino-acid polypeptide reads, in one-letter code: MPGRKARRNAPLNPTRAELPPEFAAQLRKIGDKVYCTWSAPDITAVLAQMPGKKSRKSTMRRSPSPTRVPADLKDECDQLRRIGDKVNLRQKLLNFISKLFNLIT.

The short motif at 27-35 is the BH3 1 element; it reads LRKIGDKVY. The segment at 50 to 72 is disordered; the sequence is MPGKKSRKSTMRRSPSPTRVPAD. The BH3 2 motif lies at 80–88; sequence LRRIGDKVN. The interval 92–101 is required for mitochondrial location; the sequence is KLLNFISKLF.

The protein belongs to the PMAIP1 family. As to quaternary structure, interacts with MCL1. Interacts with BCL2A1. Interacts with BAX. Interacts with BCL2L10.

The protein resides in the mitochondrion. In terms of biological role, promotes activation of caspases and apoptosis. Promotes mitochondrial membrane changes and efflux of apoptogenic proteins from the mitochondria. Contributes to p53/TP53-dependent apoptosis after radiation exposure. Promotes proteasomal degradation of MCL1. Competes with BAK1 and with BIM/BCL2L11 for binding to MCL1; can displace BAK1 and BIM/BCL2L11 from their binding sites. This is Phorbol-12-myristate-13-acetate-induced protein 1 (Pmaip1) from Rattus norvegicus (Rat).